We begin with the raw amino-acid sequence, 121 residues long: Huntingtin-interacting protein K (121 aa).

The segment covering Met1–Thr13 has biased composition (acidic residues). A disordered region spans residues Met1 to Lys75. 2 stretches are compositionally biased toward basic and acidic residues: residues Arg20 to Ile47 and Gly60 to Lys75. Ser30 is modified (phosphoserine). Residues Leu52–Asn121 form a required for association with the NAA10-NAA15 complex region. Residues Arg62–Glu107 adopt a coiled-coil conformation.

As to quaternary structure, component of the N-terminal acetyltransferase A (NatA)/HYPK complex at least composed of NAA10, NAA15 and HYPK, which has N-terminal acetyltransferase activity. Within the complex interacts with NAA10. Within the complex interacts with NAA15. Predominantly interacts with NAA15 in the NAA10-NAA15 complex (also called the NatA complex); the interaction with the NatA complex reduces the acetylation activity of the NatA complex. Interacts with HTT (via N-terminus). The NatA complex is required for HYPK stability and for reducing polyQ aggregation of HTT. Component of the N-terminal acetyltransferase E (NatE)/HYPK complex at least composed of NAA10, NAA15, NAA50 and HYPK. Within the complex interacts with NAA10 and NAA15. Does not interact with NAA50. Interaction with NAA15 reduces the capacity of NAA15 to interact with NAA50. Its capacity to interact with the NatA complex is reduced by NAA50. Does not interact with the N-terminal acetyltransferase B (NatB) complex component NAA25 or the N-terminal acetyltransferase C (NatC) complex component NAA35.

The protein resides in the nucleus. It is found in the cytoplasm. Functionally, component of several N-terminal acetyltransferase complexes. Inhibits the N-terminal acetylation activity of the N-terminal acetyltransferase NAA10-NAA15 complex (also called the NatA complex). Has chaperone-like activity preventing polyglutamine (polyQ) aggregation of HTT in neuronal cells probably while associated with the NatA complex. May play a role in the NatA complex-mediated N-terminal acetylation of PCNP. The sequence is that of Huntingtin-interacting protein K from Homo sapiens (Human).